We begin with the raw amino-acid sequence, 773 residues long: MLSLIEQIKSGKLWDFPGGIHPFENKHQSNRQPIINASIPNELVLPLKQHIGKAGDLLVKVGDRVLKGQPLTQYTSTFMLPIHAPTSGVISAIEPRTVAHPSGLSELCIVLTPDQQEEWFELQPQPDFQQLTPETLLELIRQAGISGMGGAGFPTAKKLQSGLSRTEILIINAAECEPYITADDVLMRQYAHEIIQGIEIVEHILKPKLTIIGIEDNKPEAVAALQQAAQDKPMVIRVIPTKYPSGGEKQLIKILTNLEVPKGGIPADIGLMVQNVGSLQAIARAIVHGEPLIRRVVTLTGDCFRKPRNVWALLGTPVQALLNEFGYKADKKLPRLIMGGPMMGFTLPHAQVPITKTANCILAPTRNELTSSDNEMACIRCGQCAEACPVSLLPQQLQWHAKAEEFDKCEELDLKDCIECGACAYVCPSEIPLVQYYRQAKAEIRTRSLEAEAAERAKARFEEKKARMERDKAERENRFKQAAEDRRKEMQQQGGSDAIAAAIERVKAQKAQLEPTDNSVKPAIAAAIARAKAKQAEAAQSGASEPDNSEMAKLREERKRQARERKAQKGEVTEASTSDGADDKKSAVAAAIARAKARKAEQQETESAAQPAQATPSSDDADPKKAAVAAAIARAKARKAEQGTESTAQPAQATPSSDEADPKKAAVAAAIARAKARKAEQQETESTAQPAQATPSSDDADPKKAAVAAAIARAKARKAEQQETKSTAQPEQATPSSDDADPKKAAVAAAIARAKARKAAQQSSSNLNAEEKD.

4Fe-4S ferredoxin-type domains are found at residues 368 to 398 (ELTSSDNEMACIRCGQCAEACPVSLLPQQLQ) and 408 to 437 (KCEELDLKDCIECGACAYVCPSEIPLVQYY). [4Fe-4S] cluster contacts are provided by cysteine 378, cysteine 381, cysteine 384, cysteine 388, cysteine 417, cysteine 420, cysteine 423, and cysteine 427. Over residues 460 to 490 (RFEEKKARMERDKAERENRFKQAAEDRRKEM) the composition is skewed to basic and acidic residues. Disordered stretches follow at residues 460-496 (RFEEKKARMERDKAERENRFKQAAEDRRKEMQQQGGS) and 533-773 (AKQA…EEKD). Positions 533 to 545 (AKQAEAAQSGASE) are enriched in low complexity. A compositionally biased stretch (basic and acidic residues) spans 550–572 (EMAKLREERKRQARERKAQKGEV). The segment covering 605-618 (TESAAQPAQATPSS) has biased composition (low complexity). Polar residues-rich tracts occupy residues 643–657 (GTESTAQPAQATPSS), 684–697 (TESTAQPAQATPSS), 724–737 (TKSTAQPEQATPSS), and 761–773 (QQSSSNLNAEEKD).

The protein belongs to the 4Fe4S bacterial-type ferredoxin family. RnfC subfamily. In terms of assembly, the complex is composed of six subunits: RnfA, RnfB, RnfC, RnfD, RnfE and RnfG. [4Fe-4S] cluster serves as cofactor.

Its subcellular location is the cell inner membrane. Part of a membrane-bound complex that couples electron transfer with translocation of ions across the membrane. The polypeptide is Ion-translocating oxidoreductase complex subunit C (Vibrio cholerae serotype O1 (strain ATCC 39541 / Classical Ogawa 395 / O395)).